The following is a 165-amino-acid chain: Glutamyl-tRNA(Gln) amidotransferase subunit F, mitochondrial (165 aa).

Residues 137–153 are compositionally biased toward basic and acidic residues; it reads VSDQRGERGFDTSELRT. Residues 137–165 are disordered; it reads VSDQRGERGFDTSELRTRINRAKSTAEKE.

Belongs to the GatF family. As to quaternary structure, subunit of the heterotrimeric GatFAB amidotransferase (AdT) complex, composed of A, B and F subunits.

It is found in the mitochondrion inner membrane. The catalysed reaction is L-glutamyl-tRNA(Gln) + L-glutamine + ATP + H2O = L-glutaminyl-tRNA(Gln) + L-glutamate + ADP + phosphate + H(+). Allows the formation of correctly charged Gln-tRNA(Gln) through the transamidation of misacylated Glu-tRNA(Gln) in the mitochondria. The reaction takes place in the presence of glutamine and ATP through an activated gamma-phospho-Glu-tRNA(Gln). Required for proper protein synthesis within the mitochondrion. The polypeptide is Glutamyl-tRNA(Gln) amidotransferase subunit F, mitochondrial (Clavispora lusitaniae (strain ATCC 42720) (Yeast)).